The chain runs to 366 residues: A-type ATP synthase subunit C (366 aa).

It belongs to the V-ATPase V0D/AC39 subunit family. In terms of assembly, has multiple subunits with at least A(3), B(3), C, D, E, F, H, I and proteolipid K(x).

The protein localises to the cell membrane. Functionally, component of the A-type ATP synthase that produces ATP from ADP in the presence of a proton gradient across the membrane. The chain is A-type ATP synthase subunit C from Thermococcus onnurineus (strain NA1).